A 339-amino-acid polypeptide reads, in one-letter code: Ketol-acid reductoisomerase (NADP(+)) (339 aa).

The KARI N-terminal Rossmann domain maps to 1-182 (MRVYYDRDAD…GGGRAGIIET (182 aa)). NADP(+)-binding positions include 24–27 (YGSQ), Arg-48, Ser-51, Ser-53, and 83–86 (DELQ). Residue His-108 is part of the active site. Gly-134 is a binding site for NADP(+). Residues 183–328 (TFKEECETDL…ARLRDMMPWI (146 aa)) enclose the KARI C-terminal knotted domain. The Mg(2+) site is built by Asp-191, Glu-195, Glu-227, and Glu-231. Substrate is bound at residue Ser-252.

Belongs to the ketol-acid reductoisomerase family. Mg(2+) serves as cofactor.

It carries out the reaction (2R)-2,3-dihydroxy-3-methylbutanoate + NADP(+) = (2S)-2-acetolactate + NADPH + H(+). The enzyme catalyses (2R,3R)-2,3-dihydroxy-3-methylpentanoate + NADP(+) = (S)-2-ethyl-2-hydroxy-3-oxobutanoate + NADPH + H(+). It participates in amino-acid biosynthesis; L-isoleucine biosynthesis; L-isoleucine from 2-oxobutanoate: step 2/4. The protein operates within amino-acid biosynthesis; L-valine biosynthesis; L-valine from pyruvate: step 2/4. Its function is as follows. Involved in the biosynthesis of branched-chain amino acids (BCAA). Catalyzes an alkyl-migration followed by a ketol-acid reduction of (S)-2-acetolactate (S2AL) to yield (R)-2,3-dihydroxy-isovalerate. In the isomerase reaction, S2AL is rearranged via a Mg-dependent methyl migration to produce 3-hydroxy-3-methyl-2-ketobutyrate (HMKB). In the reductase reaction, this 2-ketoacid undergoes a metal-dependent reduction by NADPH to yield (R)-2,3-dihydroxy-isovalerate. This chain is Ketol-acid reductoisomerase (NADP(+)), found in Bradyrhizobium sp. (strain ORS 278).